A 363-amino-acid chain; its full sequence is uncharacterized protein (363 aa).

This is an uncharacterized protein from Saccharomyces cerevisiae (strain ATCC 204508 / S288c) (Baker's yeast).